Reading from the N-terminus, the 253-residue chain is MGEFNEKKATCGTVCLKYLLFTYNCCFWLAGLAVMAVGIWTLALKSDYISLLASSTYLATAYILVVAGVVVMVTGVLGCCATFKERRNLLRLYFILLLIIFLLEIIAGILAYVYYQQLNTELKENLKDTMVKRYHQSGHEGVSSAVDKLQQEFHCCGSNNSQDWQDSEWIRSGEADSRVVPDSCCKTMVAGCGKRDHASNIYKVEGGCITKLETFIQEHLRVIGAVGIGIACVQVFGMIFTCCLYRSLKLEHY.

At 1 to 18 (MGEFNEKKATCGTVCLKY) the chain is on the cytoplasmic side. S-palmitoyl cysteine attachment occurs at residues C11 and C15. A helical transmembrane segment spans residues 19-39 (LLFTYNCCFWLAGLAVMAVGI). The Extracellular portion of the chain corresponds to 40–57 (WTLALKSDYISLLASSTY). Residues 58–78 (LATAYILVVAGVVVMVTGVLG) traverse the membrane as a helical segment. Residues 79 to 91 (CCATFKERRNLLR) lie on the Cytoplasmic side of the membrane. A helical transmembrane segment spans residues 92-112 (LYFILLLIIFLLEIIAGILAY). At 113–221 (VYYQQLNTEL…LETFIQEHLR (109 aa)) the chain is on the extracellular side. A glycan (N-linked (GlcNAc...) asparagine) is linked at N159. Residues 222–242 (VIGAVGIGIACVQVFGMIFTC) traverse the membrane as a helical segment. Residues C242 and C243 are each lipidated (S-palmitoyl cysteine). Over 243 to 253 (CLYRSLKLEHY) the chain is Cytoplasmic.

Belongs to the tetraspanin (TM4SF) family. In terms of assembly, interacts with integrins ITGA3:ITGB1, ITGA5:ITGB1, ITGA3:ITGB1 and ITGA6:ITGB4 and with CD9 and CD181. Interacts (via the second extracellular domain) with integrin ITGAV:ITGB3. Interacts with ITGA3; this interaction modulates ITGA3 glycosylation pattern. Interacts with F11R. Interacts with RAC1 and CDC42; these interactions mediate physical association of RAC1 and CDC42 with integrin adhesion receptor complexes. In terms of processing, palmitoylated. Palmitoylation by ZDHHC2 regulates CD151 expression, association with other tetraspanin family proteins and function in cell adhesion. Ubiquitinated by RNF128 on lysine residues present in the tetraspanin amino terminus via 'Lys-48'-linked ubiquitin leading to proteasomal degradation.

The protein resides in the cell membrane. Functionally, structural component of specialized membrane microdomains known as tetraspanin-enriched microdomains (TERMs), which act as platforms for receptor clustering and signaling. Plays a role in various cellular and molecular mechanism through its association with both integrin and non-integrin proteins. These interactions facilitate critical cellular functions, including cell-to-cell communication, wound healing, platelet aggregation, trafficking, cell motility, and angiogenesis. Via interaction with JAM-A/F11R and integrin ITGA3:ITGB1, promotes the recruitment of signaling molecules such as RAC1, CDC42 and RhoGTPases to facilitate the polarization of epithelial cells and the reorganization of the actin cytoskeleton, which are critical steps in cell migration process. Regulates the glycosylation pattern of ITGA3:ITGB1 thereby modulating its activity. Plays an essential role in the maintenance of central laminin-binding integrin ITGA6:ITGB4-containing adhesion complexes. Essential for the proper assembly of the glomerular and tubular basement membranes in kidney. Contributes to T-cell activation by modulating integrin signaling leading to activation of downstream targets PTK2 and MAPK1/MAPK3. This Mus musculus (Mouse) protein is CD151 antigen (Cd151).